A 499-amino-acid chain; its full sequence is NADH-quinone oxidoreductase subunit 14 (499 aa).

Transmembrane regions (helical) follow at residues 9-29 (ILPE…GAYL), 37-57 (TLLW…GLGN), 76-96 (FAKV…ADYM), 104-124 (FEFP…VSAG), 126-146 (LLTL…VAAM), 161-181 (FVLG…VYGF), 196-216 (AGHL…GLSF), 235-255 (PTPV…ALIA), 269-289 (WSQI…IAGI), 301-321 (SSIA…AIGV), 324-344 (MLLY…FILS), 369-389 (ALAM…LGFF), 402-422 (GMGW…FYYL), and 446-466 (YLAL…MFGV).

This sequence belongs to the complex I subunit 2 family. As to quaternary structure, NDH-1 is composed of at least 14 different subunits, Nqo1 to Nqo14. The complex has a L-shaped structure, with the hydrophobic arm (subunits Nqo7, Nqo8, Nqo10 to Nqo14) embedded in the inner membrane and the hydrophilic peripheral arm (subunits Nqo1 to Nqo6, Nqo9) protruding into the bacterial cytoplasm. The hydrophilic domain contains all the redox centers.

It is found in the cell inner membrane. The enzyme catalyses a quinone + NADH + 5 H(+)(in) = a quinol + NAD(+) + 4 H(+)(out). Functionally, NDH-1 shuttles electrons from NADH, via FMN and iron-sulfur (Fe-S) centers, to quinones in the respiratory chain. The immediate electron acceptor for the enzyme in this species is believed to be ubiquinone. Couples the redox reaction to proton translocation (for every two electrons transferred, four hydrogen ions are translocated across the cytoplasmic membrane), and thus conserves the redox energy in a proton gradient. In Paracoccus denitrificans, this protein is NADH-quinone oxidoreductase subunit 14.